Here is a 446-residue protein sequence, read N- to C-terminus: D(1A) dopamine receptor (446 aa).

Over methionine 1–arginine 22 the chain is Extracellular. Asparagine 4 carries an N-linked (GlcNAc...) asparagine glycan. The helical transmembrane segment at isoleucine 23–isoleucine 48 threads the bilayer. The Cytoplasmic portion of the chain corresponds to arginine 49–asparagine 59. A helical transmembrane segment spans residues phenylalanine 60–alanine 86. The Extracellular portion of the chain corresponds to glycine 87 to cysteine 95. Cysteine 95 and cysteine 185 are oxidised to a cystine. The chain crosses the membrane as a helical span at residues asparagine 96–valine 118. Over aspartate 119–lysine 137 the chain is Cytoplasmic. A helical transmembrane segment spans residues alanine 138–tryptophan 162. Residues histidine 163–arginine 191 are Extracellular-facing. The helical transmembrane segment at threonine 192–tyrosine 217 threads the bilayer. The Cytoplasmic portion of the chain corresponds to arginine 218–lysine 271. The chain crosses the membrane as a helical span at residues threonine 272–glutamate 298. Topologically, residues serine 299 to threonine 315 are extracellular. The helical transmembrane segment at phenylalanine 316–phenylalanine 340 threads the bilayer. Residues arginine 341–threonine 446 lie on the Cytoplasmic side of the membrane. S-palmitoyl cysteine attachment occurs at residues cysteine 350 and cysteine 354.

It belongs to the G-protein coupled receptor 1 family. Interacts with DNAJC14 via its C-terminus.

It localises to the cell membrane. It is found in the endoplasmic reticulum membrane. The protein localises to the cell projection. The protein resides in the cilium membrane. Its subcellular location is the dendrite. It localises to the dendritic spine. Its function is as follows. This is one of the five types (D1 to D5) of receptors for dopamine. The activity of this receptor is mediated by G proteins which activate adenylyl cyclase. The sequence is that of D(1A) dopamine receptor (DRD1) from Didelphis virginiana (North American opossum).